The following is a 372-amino-acid chain: Alanine racemase (372 aa).

The active-site Proton acceptor; specific for D-alanine is the K48. K48 carries the N6-(pyridoxal phosphate)lysine modification. R143 contacts substrate. Y268 functions as the Proton acceptor; specific for L-alanine in the catalytic mechanism. A substrate-binding site is contributed by M316.

The protein belongs to the alanine racemase family. Pyridoxal 5'-phosphate is required as a cofactor.

It catalyses the reaction L-alanine = D-alanine. Its pathway is amino-acid biosynthesis; D-alanine biosynthesis; D-alanine from L-alanine: step 1/1. In terms of biological role, catalyzes the interconversion of L-alanine and D-alanine. May also act on other amino acids. This chain is Alanine racemase (alr), found in Vibrio vulnificus (strain YJ016).